Here is a 340-residue protein sequence, read N- to C-terminus: Putative esterase YheT (340 aa).

Residues 73-312 (PRLVVFHGLE…TEHGGHVGFI (240 aa)) form the AB hydrolase-1 domain. Residues serine 153, aspartate 280, and histidine 308 each act as charge relay system in the active site.

This sequence belongs to the AB hydrolase superfamily. AB hydrolase 4 family.

The chain is Putative esterase YheT (yheT) from Escherichia coli (strain K12).